The chain runs to 263 residues: Phosphoinositide-3-kinase-interacting protein 1 (263 aa).

Positions 1-18 (MFGRLYFMLLLSVGLVDC) are cleaved as a signal peptide. Topologically, residues 19–163 (LSVVKDCITN…SGPKKKKDLG (145 aa)) are extracellular. In terms of domain architecture, Kringle spans 24–99 (DCITNNGEDY…KKEACDIRIC (76 aa)). 3 disulfides stabilise this stretch: C25–C99, C46–C80, and C69–C94. Residue N103 is glycosylated (N-linked (GlcNAc...) asparagine). Residues 164-184 (TLGYVLAVFMMAIIILLGGGI) form a helical membrane-spanning segment. The Cytoplasmic portion of the chain corresponds to 185–263 (TMGYFYKRGR…LMGSAGTPGA (79 aa)). The segment at 239-263 (NNQTPTQEPVEGADPLMGSAGTPGA) is disordered.

Its subcellular location is the cell membrane. Functionally, negative regulator of hepatic phosphatidylinositol 3-kinase (PI3K) activity. The chain is Phosphoinositide-3-kinase-interacting protein 1 (pik3ip1) from Danio rerio (Zebrafish).